The primary structure comprises 53 residues: Conotoxin Cal6.23 (53 aa).

An N-terminal signal peptide occupies residues 1–22 (MKLTAVLMVAVLVLTACQLITA). Cystine bridges form between Cys25–Cys40, Cys32–Cys47, and Cys39–Cys51.

It belongs to the conotoxin O1 superfamily. Expressed by the venom duct.

The protein resides in the secreted. Functionally, probable neurotoxin. The sequence is that of Conotoxin Cal6.23 from Californiconus californicus (California cone).